The primary structure comprises 379 residues: Cytochrome b (379 aa).

4 consecutive transmembrane segments (helical) span residues 33–53 (FGSL…FLAM), 77–98 (WLIR…FIHV), 113–133 (WNIG…GYVL), and 178–198 (FFAF…VHLL). Heme b-binding residues include His-83 and His-97. 2 residues coordinate heme b: His-182 and His-196. His-201 contributes to the a ubiquinone binding site. Helical transmembrane passes span 226 to 246 (TKDL…ALFF), 288 to 308 (LGGV…PLLN), 320 to 340 (VTQV…WIGG), and 347 to 367 (FTTI…ILIP).

It belongs to the cytochrome b family. As to quaternary structure, the cytochrome bc1 complex contains 11 subunits: 3 respiratory subunits (MT-CYB, CYC1 and UQCRFS1), 2 core proteins (UQCRC1 and UQCRC2) and 6 low-molecular weight proteins (UQCRH/QCR6, UQCRB/QCR7, UQCRQ/QCR8, UQCR10/QCR9, UQCR11/QCR10 and a cleavage product of UQCRFS1). This cytochrome bc1 complex then forms a dimer. The cofactor is heme b.

The protein resides in the mitochondrion inner membrane. Component of the ubiquinol-cytochrome c reductase complex (complex III or cytochrome b-c1 complex) that is part of the mitochondrial respiratory chain. The b-c1 complex mediates electron transfer from ubiquinol to cytochrome c. Contributes to the generation of a proton gradient across the mitochondrial membrane that is then used for ATP synthesis. In Akodon mystax (Caparao grass mouse), this protein is Cytochrome b (MT-CYB).